The chain runs to 264 residues: Small ribosomal subunit protein eS1B (264 aa).

Positions 233 to 264 are disordered; that stretch reads GEGGGSGKPAADETGAKVERADGYEPPVQESV. Residues 242–255 show a composition bias toward basic and acidic residues; sequence AADETGAKVERADG.

The protein belongs to the eukaryotic ribosomal protein eS1 family. As to quaternary structure, component of the small ribosomal subunit. Mature ribosomes consist of a small (40S) and a large (60S) subunit. The 40S subunit contains about 33 different proteins and 1 molecule of RNA (18S). The 60S subunit contains about 49 different proteins and 3 molecules of RNA (28S, 5.8S and 5S). Part of the small subunit (SSU) processome, composed of more than 70 proteins and the RNA chaperone small nucleolar RNA (snoRNA) U3.

It is found in the cytoplasm. The protein resides in the nucleus. The protein localises to the nucleolus. Functionally, component of the small ribosomal subunit. The ribosome is a large ribonucleoprotein complex responsible for the synthesis of proteins in the cell. Part of the small subunit (SSU) processome, first precursor of the small eukaryotic ribosomal subunit. During the assembly of the SSU processome in the nucleolus, many ribosome biogenesis factors, an RNA chaperone and ribosomal proteins associate with the nascent pre-rRNA and work in concert to generate RNA folding, modifications, rearrangements and cleavage as well as targeted degradation of pre-ribosomal RNA by the RNA exosome. May play a role during erythropoiesis. This chain is Small ribosomal subunit protein eS1B (rps3a-b), found in Xenopus laevis (African clawed frog).